The primary structure comprises 272 residues: Shikimate dehydrogenase (NADP(+)) (272 aa).

Shikimate is bound by residues 14-16 (SKS) and threonine 61. Catalysis depends on lysine 65, which acts as the Proton acceptor. Residues asparagine 86 and aspartate 102 each contribute to the shikimate site. NADP(+) contacts are provided by residues 126–130 (GAGGA), 150–155 (NRTASK), and methionine 214. Residue tyrosine 216 participates in shikimate binding. Position 239 (glycine 239) interacts with NADP(+).

The protein belongs to the shikimate dehydrogenase family. Homodimer.

It carries out the reaction shikimate + NADP(+) = 3-dehydroshikimate + NADPH + H(+). It participates in metabolic intermediate biosynthesis; chorismate biosynthesis; chorismate from D-erythrose 4-phosphate and phosphoenolpyruvate: step 4/7. Functionally, involved in the biosynthesis of the chorismate, which leads to the biosynthesis of aromatic amino acids. Catalyzes the reversible NADPH linked reduction of 3-dehydroshikimate (DHSA) to yield shikimate (SA). This Pseudoalteromonas atlantica (strain T6c / ATCC BAA-1087) protein is Shikimate dehydrogenase (NADP(+)).